Reading from the N-terminus, the 436-residue chain is [Pyruvate dehydrogenase (acetyl-transferring)] kinase isozyme 1, mitochondrial (436 aa).

Residues 1 to 28 constitute a mitochondrion transit peptide; that stretch reads MRLARLLRGAALAGPGPGLRAAGFSRSF. Residue tyrosine 136 is modified to Phosphotyrosine; by FGFR1. A Histidine kinase domain is found at 163–393; that stretch reads YKESFGVDPV…DAVIYIKALS (231 aa). At tyrosine 243 the chain carries Phosphotyrosine; by FGFR1, ABL1, FLT3 and JAK2. A Phosphotyrosine; by FGFR1 modification is found at tyrosine 244. ATP-binding positions include 279–286, aspartate 318, 337–338, and 354–359; these read ELFKNAMR, ST, and GFGYGL. Threonine 338 bears the Phosphothreonine mark. Lysine 405 is modified (N6-succinyllysine).

The protein belongs to the PDK/BCKDK protein kinase family. As to quaternary structure, homodimer, and heterodimer with PDK2. Interacts with the pyruvate dehydrogenase complex subunit DLAT, and is part of the multimeric pyruvate dehydrogenase complex that contains multiple copies of pyruvate dehydrogenase (E1), dihydrolipoamide acetyltransferase (DLAT, E2) and lipoamide dehydrogenase (DLD, E3). Interacts with phosphoglycerate kinase PGK1; the interaction is direct, occurs under hypoxic conditions and leads to PDK1-mediated inhibition of pyruvate dehydrogenase complex activity. Phosphorylated by constitutively activated ABL1, FGFR1, FLT3 and JAK2 (in vitro), and this may also occur in cancer cells that express constitutively activated ABL1, FGFR1, FLT3 and JAK2. Phosphorylation at Tyr-243 and Tyr-244 strongly increases kinase activity, while phosphorylation at Tyr-136 has a lesser effect. Phosphorylated under hypoxic conditions at Thr-338 by phosphoglycerate kinase PGK1 which has an activating effect. As to expression, expressed predominantly in the heart. Detected at lower levels in liver, skeletal muscle and pancreas.

It localises to the mitochondrion matrix. It catalyses the reaction L-seryl-[pyruvate dehydrogenase E1 alpha subunit] + ATP = O-phospho-L-seryl-[pyruvate dehydrogenase E1 alpha subunit] + ADP + H(+). With respect to regulation, activity is enhanced by binding to the pyruvate dehydrogenase subunit DLAT. Inhibited by AZD7545; this compound interferes with DLAT binding and thereby inhibits kinase activity. Inhibited by dichloroacetate and radicicol. Activated under hypoxic conditions by phosphoglycerate kinase PGK1-mediated phosphorylation at Thr-338. Functionally, kinase that plays a key role in regulation of glucose and fatty acid metabolism and homeostasis via phosphorylation of the pyruvate dehydrogenase subunits PDHA1 and PDHA2. This inhibits pyruvate dehydrogenase activity, and thereby regulates metabolite flux through the tricarboxylic acid cycle, down-regulates aerobic respiration and inhibits the formation of acetyl-coenzyme A from pyruvate. Plays an important role in cellular responses to hypoxia and is important for cell proliferation under hypoxia. This chain is [Pyruvate dehydrogenase (acetyl-transferring)] kinase isozyme 1, mitochondrial (PDK1), found in Homo sapiens (Human).